Reading from the N-terminus, the 61-residue chain is Large ribosomal subunit protein uL30 (61 aa).

Belongs to the universal ribosomal protein uL30 family. In terms of assembly, part of the 50S ribosomal subunit.

The chain is Large ribosomal subunit protein uL30 from Bifidobacterium longum (strain DJO10A).